Reading from the N-terminus, the 63-residue chain is Large ribosomal subunit protein bL28c (63 aa).

The protein belongs to the bacterial ribosomal protein bL28 family.

Its subcellular location is the plastid. It localises to the chloroplast. The chain is Large ribosomal subunit protein bL28c (rpl28) from Porphyra purpurea (Red seaweed).